We begin with the raw amino-acid sequence, 288 residues long: Glutamate racemase (288 aa).

Residues 1–21 (MAIARQDVNISSPEATTSDAQ) are disordered. A compositionally biased stretch (polar residues) spans 8-21 (VNISSPEATTSDAQ). Substrate contacts are provided by residues 32–33 (DS) and 64–65 (YG). Cysteine 96 acts as the Proton donor/acceptor in catalysis. 97 to 98 (NT) contributes to the substrate binding site. Catalysis depends on cysteine 209, which acts as the Proton donor/acceptor. 210–211 (TH) is a binding site for substrate.

The protein belongs to the aspartate/glutamate racemases family.

It carries out the reaction L-glutamate = D-glutamate. The protein operates within cell wall biogenesis; peptidoglycan biosynthesis. Its function is as follows. Provides the (R)-glutamate required for cell wall biosynthesis. The chain is Glutamate racemase from Proteus mirabilis (strain HI4320).